Here is a 326-residue protein sequence, read N- to C-terminus: Beta-ketoacyl-[acyl-carrier-protein] synthase III (326 aa).

Residues Cys-120 and His-253 contribute to the active site. The ACP-binding stretch occupies residues 254 to 258; that stretch reads QANIR. Residue Asn-283 is part of the active site.

The protein belongs to the thiolase-like superfamily. FabH family. In terms of assembly, homodimer.

It localises to the cytoplasm. The catalysed reaction is malonyl-[ACP] + acetyl-CoA + H(+) = 3-oxobutanoyl-[ACP] + CO2 + CoA. It participates in lipid metabolism; fatty acid biosynthesis. Catalyzes the condensation reaction of fatty acid synthesis by the addition to an acyl acceptor of two carbons from malonyl-ACP. Catalyzes the first condensation reaction which initiates fatty acid synthesis and may therefore play a role in governing the total rate of fatty acid production. Possesses both acetoacetyl-ACP synthase and acetyl transacylase activities. Its substrate specificity determines the biosynthesis of branched-chain and/or straight-chain of fatty acids. In Ralstonia nicotianae (strain ATCC BAA-1114 / GMI1000) (Ralstonia solanacearum), this protein is Beta-ketoacyl-[acyl-carrier-protein] synthase III.